Reading from the N-terminus, the 578-residue chain is MAAKSDGRGVVTGFAQLHNLDEVVGTGEDDARNGSSFHICHCCNTSSCYWGCRSACLHYLRAKGKGEGKETARPTPEERLWLDCLWIVLALLVFFWDVGTDLWLAVDYYHKQDFLWSGLTLFFVLVPSVLVQILSFRWFVQDYTGGGLGSVEGLSSRRAAASLQRDKCCRLSVWIWQTVIHIFQLGQVWRYIRTMYLGIQSHRQKENQRRFYWAMMYEYADVNMLRLLETFLESAPQLVLQLCIMIQSNKAEWLQCVSALSSLLSLAWVLASYHKLLRDSRDDKKSMSYRGALVHLFWRLFTISSRVLSLALFASVFHIYFGIFVVLHWCAMAFWVIHGGTDFCMSKWEEVLFNMVVGVVYVFCWFNVREGRTRYRMVAYYVVVLLENVILTSLWYAYRDPATTDAYASLALCGVFLCFASGVACMVLYYGVLHPMGPRLRVLASSCCAELLWGLPLPPEAEPMAPTPGPRGSQATPTRGLTGEYAESDETATDTCLPVFQVRSTEPVDAAGRPIQPEGPFIKIDMPRKRYPAWDAHFVDRRLRRTVNVLQYISPNAAGIRYRDGPLLYELLQYESSL.

Transmembrane regions (helical) follow at residues 86-106 (WIVL…WLAV), 114-134 (FLWS…VQIL), 253-273 (WLQC…LASY), 307-327 (VLSL…FVVL), 348-368 (WEEV…WFNV), 377-397 (MVAY…LWYA), and 410-430 (LALC…VLYY).

The protein belongs to the XK family.

The protein resides in the cell membrane. The chain is XK-related protein 6 (xkr6) from Tetraodon nigroviridis (Spotted green pufferfish).